Consider the following 335-residue polypeptide: Cell division protein ZipA (335 aa).

Residues 1–6 are Periplasmic-facing; that stretch reads MENLQL. The helical transmembrane segment at 7 to 27 threads the bilayer; that stretch reads VLFVLGAVAIIAVLVHGFWSI. The Cytoplasmic portion of the chain corresponds to 28-335; it reads RRQQPKSLKE…SYLQRIRAQM (308 aa). Disordered stretches follow at residues 37-128 and 163-185; these read ESPM…NEEV and RPAP…VSVE. Positions 170-185 are enriched in low complexity; sequence APQSVAPASVEPVSVE.

This sequence belongs to the ZipA family. As to quaternary structure, interacts with FtsZ via their C-terminal domains.

It localises to the cell inner membrane. Functionally, essential cell division protein that stabilizes the FtsZ protofilaments by cross-linking them and that serves as a cytoplasmic membrane anchor for the Z ring. Also required for the recruitment to the septal ring of downstream cell division proteins. This chain is Cell division protein ZipA, found in Shewanella loihica (strain ATCC BAA-1088 / PV-4).